The chain runs to 452 residues: Adenylyltransferase and sulfurtransferase MOCS3 (452 aa).

ATP is bound by residues glycine 99, aspartate 120, 127–131 (SNLHR), lysine 144, and 188–189 (DN). Zn(2+)-binding residues include cysteine 230 and cysteine 233. Cysteine 247 functions as the Glycyl thioester intermediate; for adenylyltransferase activity in the catalytic mechanism. Positions 305 and 308 each coordinate Zn(2+). The region spanning 354 to 450 (KTKAHLLLDV…WTNQVDQSFP (97 aa)) is the Rhodanese domain. Cysteine 409 functions as the Cysteine persulfide intermediate; for sulfurtransferase activity in the catalytic mechanism.

It in the N-terminal section; belongs to the HesA/MoeB/ThiF family. UBA4 subfamily. It depends on Zn(2+) as a cofactor.

It localises to the cytoplasm. The protein localises to the cytosol. The enzyme catalyses [molybdopterin-synthase sulfur-carrier protein]-C-terminal Gly-Gly + ATP + H(+) = [molybdopterin-synthase sulfur-carrier protein]-C-terminal Gly-Gly-AMP + diphosphate. The catalysed reaction is [molybdopterin-synthase sulfur-carrier protein]-C-terminal Gly-Gly-AMP + S-sulfanyl-L-cysteinyl-[cysteine desulfurase] + AH2 = [molybdopterin-synthase sulfur-carrier protein]-C-terminal-Gly-aminoethanethioate + L-cysteinyl-[cysteine desulfurase] + A + AMP + 2 H(+). Its pathway is tRNA modification; 5-methoxycarbonylmethyl-2-thiouridine-tRNA biosynthesis. The protein operates within cofactor biosynthesis; molybdopterin biosynthesis. In terms of biological role, plays a central role in 2-thiolation of mcm(5)S(2)U at tRNA wobble positions of cytosolic tRNA(Lys), tRNA(Glu) and tRNA(Gln). Also essential during biosynthesis of the molybdenum cofactor. Acts by mediating the C-terminal thiocarboxylation of sulfur carriers URM1 and MOCS2A. Its N-terminus first activates URM1 and MOCS2A as acyl-adenylates (-COAMP), then the persulfide sulfur on the catalytic cysteine is transferred to URM1 and MOCS2A to form thiocarboxylation (-COSH) of their C-terminus. The reaction probably involves hydrogen sulfide that is generated from the persulfide intermediate and that acts as a nucleophile towards URM1 and MOCS2A. Subsequently, a transient disulfide bond is formed. Does not use thiosulfate as sulfur donor; NFS1 probably acting as a sulfur donor for thiocarboxylation reactions. The protein is Adenylyltransferase and sulfurtransferase MOCS3 of Drosophila virilis (Fruit fly).